Here is a 171-residue protein sequence, read N- to C-terminus: Putative ankyrin repeat protein PA3287 (171 aa).

3 ANK repeats span residues 48–77 (KGDS…DPDL), 81–110 (AGQT…DVEG), and 114–143 (DGKT…RRDA).

This chain is Putative ankyrin repeat protein PA3287, found in Pseudomonas aeruginosa (strain ATCC 15692 / DSM 22644 / CIP 104116 / JCM 14847 / LMG 12228 / 1C / PRS 101 / PAO1).